A 212-amino-acid chain; its full sequence is Ribosomal RNA large subunit methyltransferase E (212 aa).

Positions 57, 59, 77, 93, and 122 each coordinate S-adenosyl-L-methionine. Residue Lys-162 is the Proton acceptor of the active site.

The protein belongs to the class I-like SAM-binding methyltransferase superfamily. RNA methyltransferase RlmE family.

Its subcellular location is the cytoplasm. The catalysed reaction is uridine(2552) in 23S rRNA + S-adenosyl-L-methionine = 2'-O-methyluridine(2552) in 23S rRNA + S-adenosyl-L-homocysteine + H(+). Its function is as follows. Specifically methylates the uridine in position 2552 of 23S rRNA at the 2'-O position of the ribose in the fully assembled 50S ribosomal subunit. This is Ribosomal RNA large subunit methyltransferase E from Coxiella burnetii (strain RSA 331 / Henzerling II).